Here is a 1143-residue protein sequence, read N- to C-terminus: DNA-directed RNA polymerase subunit beta (1143 aa).

This sequence belongs to the RNA polymerase beta chain family. In terms of assembly, in plastids the minimal PEP RNA polymerase catalytic core is composed of four subunits: alpha, beta, beta', and beta''. When a (nuclear-encoded) sigma factor is associated with the core the holoenzyme is formed, which can initiate transcription.

Its subcellular location is the plastid. It localises to the chloroplast. It carries out the reaction RNA(n) + a ribonucleoside 5'-triphosphate = RNA(n+1) + diphosphate. Functionally, DNA-dependent RNA polymerase catalyzes the transcription of DNA into RNA using the four ribonucleoside triphosphates as substrates. In Porphyra purpurea (Red seaweed), this protein is DNA-directed RNA polymerase subunit beta.